The following is a 181-amino-acid chain: MASISSSAIATVNRTTSTQASLAAPFTGLKSNVAFPVTKKANNDFSSLPSNGGRVQCMKVWPPIGLKKYETLSYLPPLSDEALSKEIDYLIRNKWIPCLEFELEHGFVYREHHHSPGYYDGRYWTMWKLPMFGCTDSAQVMKEVGECKKEYPNAFIRVIGFDNIRQVQCISFIVAKPPGVL.

The N-terminal 56 residues, M1 to Q56, are a transit peptide targeting the chloroplast.

The protein belongs to the RuBisCO small chain family. In terms of assembly, heterohexadecamer of 8 large and 8 small subunits.

It localises to the plastid. It is found in the chloroplast. Its function is as follows. RuBisCO catalyzes two reactions: the carboxylation of D-ribulose 1,5-bisphosphate, the primary event in carbon dioxide fixation, as well as the oxidative fragmentation of the pentose substrate. Both reactions occur simultaneously and in competition at the same active site. Although the small subunit is not catalytic it is essential for maximal activity. This is Ribulose bisphosphate carboxylase small subunit, chloroplastic from Lactuca sativa (Garden lettuce).